Reading from the N-terminus, the 947-residue chain is MNNKKTATNRKGMIPNRLNKFSIRKYSVGTASILVGTTLIFGLSGHEAKAAEHTNGELNQSKNETTAPSENKTTKKVDSRQLKDNTQTATADQPKVTMSDSATVKETSSNMQSPQNATANQSTTKTSNVTTNDKSSTTYSNETDKSNLTQAKDVSTTPKTTTIKPRTLNRMAVNTVAAPQQGTNVNDKVHFSNIDIAIDKGHVNQTTGKTEFWATSSDVLKLKANYTIDDSVKEGDTFTFKYGQYFRPGSVRLPSQTQNLYNAQGNIIAKGIYDSTTNTTTYTFTNYVDQYTNVRGSFEQVAFAKRKNATTDKTAYKMEVTLGNDTYSEEIIVDYGNKKAQPLISSTNYINNEDLSRNMTAYVNQPKNTYTKQTFVTNLTGYKFNPNAKNFKIYEVTDQNQFVDSFTPDTSKLKDVTDQFDVIYSNDNKTATVDLMKGQTSSNKQYIIQQVAYPDNSSTDNGKIDYTLDTDKTKYSWSNSYSNVNGSSTANGDQKKYNLGDYVWEDTNKDGKQDANEKGIKGVYVILKDSNGKELDRTTTDENGKYQFTGLSNGTYSVEFSTPAGYTPTTANVGTDDAVDSDGLTTTGVIKDADNMTLDSGFYKTPKYSLGDYVWYDSNKDGKQDSTEKGIKGVKVTLQNEKGEVIGTTETDENGKYRFDNLDSGKYKVIFEKPAGLTQTGTNTTEDDKDADGGEVDVTITDHDDFTLDNGYYEEETSDSDSDSDSDSDSDSDSDSDSDSDSDSDSDSDSDSDSDSDSDSDSDSDSDSDSDSDSDSDSDSDSDSDSDSDSDSDSDSDSDSDSDSDSDSDSDSDSDSDSDSDSDSDSDSDSDSDSDSDSDSDSDSDSDSDSDSDSDSDSDSDSDSDSDSDSDSDSDNDSDSDSDSDSDAGKHTPAKPMSTVKDQHKTAKALPETGSENNNSNNGTLFGGLFAALGSLLLFGRRKKQNK.

Residues 1–50 form the signal peptide; sequence MNNKKTATNRKGMIPNRLNKFSIRKYSVGTASILVGTTLIFGLSGHEAKA. Positions 51–164 are disordered; sequence AEHTNGELNQ…STTPKTTTIK (114 aa). Residues 51 to 495 form a ligand binding A region region; sequence AEHTNGELNQ…GSSTANGDQK (445 aa). The span at 56 to 71 shows a compositional bias: polar residues; sequence GELNQSKNETTAPSEN. Over residues 72–83 the composition is skewed to basic and acidic residues; the sequence is KTTKKVDSRQLK. Residues 84–155 show a composition bias toward polar residues; the sequence is DNTQTATADQ…SNLTQAKDVS (72 aa). 2 consecutive CNA-B domains span residues 496–606 and 607–717; these read KYNL…YKTP and KYSL…EEET. A disordered region spans residues 678–927; that stretch reads TQTGTNTTED…NNSNNGTLFG (250 aa). Acidic residues-rich tracts occupy residues 685–695 and 712–886; these read TEDDKDADGGE and YYEE…DSDS. Residues 910–914 carry the LPXTG sorting signal motif; it reads LPETG. Over residues 912–927 the composition is skewed to low complexity; the sequence is ETGSENNNSNNGTLFG. Pentaglycyl murein peptidoglycan amidated threonine is present on T913. Positions 914 to 947 are cleaved as a propeptide — removed by sortase; it reads GSENNNSNNGTLFGGLFAALGSLLLFGRRKKQNK.

It belongs to the serine-aspartate repeat-containing protein (SDr) family. As to quaternary structure, homodimerizes; via N2-Domain. Interacts with host NRXN1; this interaction mediates bacterial attachment to host cells.

The protein resides in the secreted. It localises to the cell wall. Cell surface-associated calcium-binding protein which plays an important role in adhesion and pathogenesis. Mediates interactions with components of the extracellular matrix such as host NRXN1 to promote bacterial adhesion. The chain is Serine-aspartate repeat-containing protein C (sdrC) from Staphylococcus aureus (strain COL).